A 242-amino-acid chain; its full sequence is uncharacterized protein (242 aa).

Transmembrane regions (helical) follow at residues 4–24 (NYQV…YYVV) and 34–54 (LLFG…WLFG). The N-linked (GlcNAc...) asparagine; by host glycan is linked to asparagine 73. A run of 3 helical transmembrane segments spans residues 74-94 (YTIV…VIGY), 106-126 (VLTV…YGGF), and 162-182 (LDVF…FVMY). N-linked (GlcNAc...) asparagine; by host glycosylation is present at asparagine 185. 2 consecutive transmembrane segments (helical) span residues 189–209 (VIGL…APTL) and 217–237 (CLLS…STGI).

The protein resides in the membrane. This is an uncharacterized protein from Acanthamoeba polyphaga mimivirus (APMV).